The following is an 81-amino-acid chain: Photosystem I iron-sulfur center (81 aa).

2 4Fe-4S ferredoxin-type domains span residues 2-31 (AHTV…MVPW) and 39-68 (MASA…IRVY). [4Fe-4S] cluster is bound by residues C11, C14, C17, C21, C48, C51, C54, and C58.

In terms of assembly, the eukaryotic PSI reaction center is composed of at least 11 subunits. Requires [4Fe-4S] cluster as cofactor.

It localises to the plastid. Its subcellular location is the chloroplast thylakoid membrane. It catalyses the reaction reduced [plastocyanin] + hnu + oxidized [2Fe-2S]-[ferredoxin] = oxidized [plastocyanin] + reduced [2Fe-2S]-[ferredoxin]. In terms of biological role, apoprotein for the two 4Fe-4S centers FA and FB of photosystem I (PSI); essential for photochemical activity. FB is the terminal electron acceptor of PSI, donating electrons to ferredoxin. The C-terminus interacts with PsaA/B/D and helps assemble the protein into the PSI complex. Required for binding of PsaD and PsaE to PSI. PSI is a plastocyanin/cytochrome c6-ferredoxin oxidoreductase, converting photonic excitation into a charge separation, which transfers an electron from the donor P700 chlorophyll pair to the spectroscopically characterized acceptors A0, A1, FX, FA and FB in turn. The sequence is that of Photosystem I iron-sulfur center from Cyanidioschyzon merolae (strain NIES-3377 / 10D) (Unicellular red alga).